We begin with the raw amino-acid sequence, 753 residues long: Polyribonucleotide nucleotidyltransferase (753 aa).

The Mg(2+) site is built by D543 and D549. The region spanning 609–668 (PRITTVKIPVAKIGELIGPKGKNINALTEETGANISIEDDGTVFISAADGASAEAAIEKI) is the KH domain. Positions 680–749 (GERFLGTVVK…NRGKISLVPV (70 aa)) constitute an S1 motif domain.

It belongs to the polyribonucleotide nucleotidyltransferase family. Requires Mg(2+) as cofactor.

It is found in the cytoplasm. The catalysed reaction is RNA(n+1) + phosphate = RNA(n) + a ribonucleoside 5'-diphosphate. Functionally, involved in mRNA degradation. Catalyzes the phosphorolysis of single-stranded polyribonucleotides processively in the 3'- to 5'-direction. The chain is Polyribonucleotide nucleotidyltransferase from Corynebacterium glutamicum (strain ATCC 13032 / DSM 20300 / JCM 1318 / BCRC 11384 / CCUG 27702 / LMG 3730 / NBRC 12168 / NCIMB 10025 / NRRL B-2784 / 534).